Consider the following 153-residue polypeptide: Natriuretic peptides A (153 aa).

The N-terminal stretch at Met1 to Ala25 is a signal peptide. 2 propeptides span residues Asn26–Arg123 and Asp93–Asp103. The segment at Val62–Ser104 is disordered. Ser129 is modified (phosphoserine). An intrachain disulfide couples Cys130 to Cys146. Residues Asn147–Tyr151 form an important for degradation of atrial natriuretic peptide by IDE region.

It belongs to the natriuretic peptide family. In terms of assembly, homodimer; disulfide-linked antiparallel dimer. The precursor molecule is proteolytically cleaved by CORIN at Arg-123 to produce the atrial natriuretic peptide. Undergoes further proteolytic cleavage by unknown proteases to give rise to long-acting natriuretic peptide, vessel dilator and kaliuretic peptide. Additional processing gives rise to the auriculin and atriopeptin peptides. In the kidneys, alternative processing by an unknown protease results in the peptide urodilatin. Post-translationally, cleavage by MME initiates degradation of the factor and thereby regulates its activity. Degradation by IDE results in reduced activation of NPR1 (in vitro). During IDE degradation, the resulting products can temporarily stimulate NPR2 to produce cGMP, before the fragments are completely degraded and inactivated by IDE (in vitro). In terms of processing, degraded by IDE. Phosphorylation on Ser-129 decreases vasorelaxant activity.

The protein resides in the secreted. It is found in the perikaryon. The protein localises to the cell projection. Its function is as follows. Hormone that plays a key role in mediating cardio-renal homeostasis, and is involved in vascular remodeling and regulating energy metabolism. Acts by specifically binding and stimulating NPR1 to produce cGMP, which in turn activates effector proteins, such as PRKG1, that drive various biological responses. Regulates vasodilation, natriuresis, diuresis and aldosterone synthesis and is therefore essential for regulating blood pressure, controlling the extracellular fluid volume and maintaining the fluid-electrolyte balance. Also involved in inhibiting cardiac remodeling and cardiac hypertrophy by inducing cardiomyocyte apoptosis and attenuating the growth of cardiomyocytes and fibroblasts. Plays a role in female pregnancy by promoting trophoblast invasion and spiral artery remodeling in uterus, and thus prevents pregnancy-induced hypertension. In adipose tissue, acts in various cGMP- and PKG-dependent pathways to regulate lipid metabolism and energy homeostasis. This includes up-regulating lipid metabolism and mitochondrial oxygen utilization by activating the AMP-activated protein kinase (AMPK), and increasing energy expenditure by acting via MAPK11 to promote the UCP1-dependent thermogenesis of brown adipose tissue. Binds the clearance receptor NPR3 which removes the hormone from circulation. In terms of biological role, may have a role in cardio-renal homeostasis through regulation of natriuresis, diuresis, vasodilation, and inhibiting aldosterone synthesis. In vitro, promotes the production of cGMP and induces vasodilation. May promote natriuresis, at least in part, by enhancing prostaglandin E2 synthesis resulting in the inhibition of renal Na+-K+-ATPase. However reports on the involvement of this peptide in mammal blood volume and blood pressure homeostasis are conflicting; according to a report, in vivo it is not sufficient to activate cGMP and does not inhibit collecting duct transport nor effect diuresis and natriuresis. Appears to bind to specific receptors that are distinct from the receptors bound by atrial natriuretic peptide and vessel dilator. Possibly enhances protein excretion in urine by decreasing proximal tubular protein reabsorption. Functionally, may have a role in cardio-renal homeostasis through regulation of natriuresis, diuresis, and vasodilation. In vitro, promotes the production of cGMP and induces vasodilation. May promote natriuresis, at least in part, by enhancing prostaglandin E2 synthesis resulting in the inhibition of renal Na+-K+-ATPase. However reports on the involvement of this peptide in mammal blood volume and blood pressure homeostasis are conflicting; according to a report it is not sufficient to activate cGMP and does not inhibit collecting duct transport nor effect diuresis and natriuresis. Appears to bind to specific receptors that are distinct from the receptors bound by the atrial natriuretic and long-acting natriuretic peptides. Possibly functions in protein excretion in urine by maintaining the integrity of the proximal tubules and enhancing protein excretion by decreasing proximal tubular protein reabsorption. May have a role in cardio-renal homeostasis through regulation of diuresis and inhibiting aldosterone synthesis. In vitro, promotes the production of cGMP and induces vasodilation. May promote natriuresis, at least in part, by enhancing prostaglandin E2 synthesis resulting in the inhibition of renal Na+-K+-ATPase. May have a role in potassium excretion but not sodium excretion (natriuresis). Possibly enhances protein excretion in urine by decreasing proximal tubular protein reabsorption. Its function is as follows. Hormone produced in the kidneys that appears to be important for maintaining cardio-renal homeostasis. Mediates vasodilation, natriuresis and diuresis primarily in the renal system, in order to maintain the extracellular fluid volume and control the fluid-electrolyte balance. Specifically binds and stimulates cGMP production by renal transmembrane receptors, likely NPR1. Urodilatin not ANP, may be the natriuretic peptide responsible for the regulation of sodium and water homeostasis in the kidney. In terms of biological role, may have a role in cardio-renal homeostasis through regulation of natriuresis and vasodilation. In vivo promotes natriuresis and in vitro, vasodilates renal artery strips. Functionally, may have a role in cardio-renal homeostasis through regulation of regulation of natriuresis and vasodilation. In vivo promotes natriuresis. In vitro, vasodilates intestinal smooth muscle but not smooth muscle strips. May have a role in cardio-renal homeostasis through regulation of natriuresis and vasodilation. In vivo promotes natriuresis. In vitro, selectively vasodilates intestinal and vascular smooth muscle strips. Its function is as follows. May have a role in cardio-renal homeostasis through regulation of natriuresis and vasodilation. In vivo promotes natriuresis. In vitro, selectively vasodilates intestinal smooth muscle but not vascular smooth muscle strips. This chain is Natriuretic peptides A (NPPA), found in Felis catus (Cat).